We begin with the raw amino-acid sequence, 137 residues long: Neutral phospholipase A2 ammodytin I2 (137 aa).

Residues 1-16 form the signal peptide; sequence MRTLWIVAVCLIGVEG. Cystine bridges form between C42-C131, C44-C60, C59-C111, C65-C137, C66-C104, C73-C97, and C91-C102. Y43, G45, and G47 together coordinate Ca(2+). H63 is an active-site residue. D64 provides a ligand contact to Ca(2+). Residue D105 is part of the active site.

Belongs to the phospholipase A2 family. Group II subfamily. D49 sub-subfamily. Requires Ca(2+) as cofactor. In terms of tissue distribution, expressed by the venom gland.

It localises to the secreted. The enzyme catalyses a 1,2-diacyl-sn-glycero-3-phosphocholine + H2O = a 1-acyl-sn-glycero-3-phosphocholine + a fatty acid + H(+). Snake venom phospholipase A2 (PLA2) that has enzymatic activity but is non-toxic. Displays low binding affinity and enzymatic activity on phosphatidylserine-containing vesicles and HEK-293 plasma membranes, in contrast to ammodytoxins that have high activity on these phospholipids. PLA2 catalyzes the calcium-dependent hydrolysis of the 2-acyl groups in 3-sn-phosphoglycerides. The polypeptide is Neutral phospholipase A2 ammodytin I2 (Vipera ammodytes ammodytes (Western sand viper)).